A 276-amino-acid polypeptide reads, in one-letter code: Neuroendocrine protein 7B2 (276 aa).

Cysteines 155 and 168 form a disulfide.

This sequence belongs to the 7B2 family. In terms of assembly, interacts with amon/PC2 early in the secretory pathway. Dissociation occurs at later stages.

Its subcellular location is the secreted. Functionally, acts as a molecular chaperone for neuroendocrine convertase amon/PC2, preventing its premature activation in the regulated secretory pathway. Binds to inactive amon in the endoplasmic reticulum and facilitates its transport from there to later compartments of the secretory pathway where it is proteolytically matured and activated. Also required for cleavage of amon. The sequence is that of Neuroendocrine protein 7B2 from Drosophila melanogaster (Fruit fly).